Consider the following 102-residue polypeptide: Small ribosomal subunit protein uS10 (102 aa).

It belongs to the universal ribosomal protein uS10 family. In terms of assembly, part of the 30S ribosomal subunit.

In terms of biological role, involved in the binding of tRNA to the ribosomes. In Lactiplantibacillus plantarum (strain ATCC BAA-793 / NCIMB 8826 / WCFS1) (Lactobacillus plantarum), this protein is Small ribosomal subunit protein uS10.